Reading from the N-terminus, the 494-residue chain is Cobyrinate a,c-diamide synthase (494 aa).

Residues 270 to 475 (KIGVALDEAF…AHLHGVAYRE (206 aa)) form the GATase cobBQ-type domain. The active-site Nucleophile is Cys352.

The protein belongs to the CobB/CbiA family. It depends on Mg(2+) as a cofactor.

The enzyme catalyses cob(II)yrinate + 2 L-glutamine + 2 ATP + 2 H2O = cob(II)yrinate a,c diamide + 2 L-glutamate + 2 ADP + 2 phosphate + 2 H(+). It catalyses the reaction Ni-sirohydrochlorin + 2 L-glutamine + 2 ATP + 2 H2O = Ni-sirohydrochlorin a,c-diamide + 2 L-glutamate + 2 ADP + 2 phosphate + 2 H(+). The protein operates within cofactor biosynthesis; adenosylcobalamin biosynthesis; cob(II)yrinate a,c-diamide from sirohydrochlorin (anaerobic route): step 10/10. In terms of biological role, catalyzes the ATP-dependent amidation of the two carboxylate groups at positions a and c of cobyrinate, using either L-glutamine or ammonia as the nitrogen source (Potential). Involved in the biosynthesis of the unique nickel-containing tetrapyrrole coenzyme F430, the prosthetic group of methyl-coenzyme M reductase (MCR), which plays a key role in methanogenesis and anaerobic methane oxidation. Catalyzes the ATP-dependent amidation of the two carboxylate groups at positions a and c of Ni-sirohydrochlorin, using L-glutamine or ammonia as the nitrogen source. Also able to use sirohydrochlorin as substrate, but only produces a monoamide species in a much slower reaction. Unable to use other metallosirohydrochlorins such as sirohaem and Co-sirohydrochlorin. The sequence is that of Cobyrinate a,c-diamide synthase from Methanosarcina barkeri (strain Fusaro / DSM 804).